Consider the following 366-residue polypeptide: 4-hydroxy-3-methylbut-2-en-1-yl diphosphate synthase (flavodoxin) (366 aa).

[4Fe-4S] cluster is bound by residues Cys270, Cys273, Cys305, and Glu312.

It belongs to the IspG family. It depends on [4Fe-4S] cluster as a cofactor.

It carries out the reaction (2E)-4-hydroxy-3-methylbut-2-enyl diphosphate + oxidized [flavodoxin] + H2O + 2 H(+) = 2-C-methyl-D-erythritol 2,4-cyclic diphosphate + reduced [flavodoxin]. The protein operates within isoprenoid biosynthesis; isopentenyl diphosphate biosynthesis via DXP pathway; isopentenyl diphosphate from 1-deoxy-D-xylulose 5-phosphate: step 5/6. Functionally, converts 2C-methyl-D-erythritol 2,4-cyclodiphosphate (ME-2,4cPP) into 1-hydroxy-2-methyl-2-(E)-butenyl 4-diphosphate. This Wigglesworthia glossinidia brevipalpis protein is 4-hydroxy-3-methylbut-2-en-1-yl diphosphate synthase (flavodoxin).